The following is a 496-amino-acid chain: ATP synthase subunit beta, chloroplastic (496 aa).

Residue 170–177 participates in ATP binding; that stretch reads GGAGVGKT.

This sequence belongs to the ATPase alpha/beta chains family. As to quaternary structure, F-type ATPases have 2 components, CF(1) - the catalytic core - and CF(0) - the membrane proton channel. CF(1) has five subunits: alpha(3), beta(3), gamma(1), delta(1), epsilon(1). CF(0) has four main subunits: a(1), b(1), b'(1) and c(9-12).

It is found in the plastid. Its subcellular location is the chloroplast thylakoid membrane. It catalyses the reaction ATP + H2O + 4 H(+)(in) = ADP + phosphate + 5 H(+)(out). Its function is as follows. Produces ATP from ADP in the presence of a proton gradient across the membrane. The catalytic sites are hosted primarily by the beta subunits. The sequence is that of ATP synthase subunit beta, chloroplastic from Dioscorea elephantipes (Elephant's foot yam).